We begin with the raw amino-acid sequence, 684 residues long: MACLGFLLPVGFLLLISTVAGGKYGVAHVVSENWSKDYCILFSSDYITLPRDLHHAPLLPLYDGTKAPWCPGEDSPHQAQLRSPSQRPLRQTTAMVMRGNCSFHTKGWLAQGQGAHGLLIVSRVSDQQCSDTTLAPQDPRQPLADLTIPVAMLHYADMLDILSHTRGEAVVRVAMYAPPEPIIDYNMLVIFILAVGTVAAGGYWAGLTEANRLQRRRARRGGGSGGHHQLQEAAAAEGAQKEDNEDIPVDFTPAMTGVVVTLSCSLMLLLYFFYDHFVYVTIGIFGLGAGIGLYSCLSPLVCRLSLRQYQRPPHSLWASLPLPLLLLASLCATVIIFWVAYRNEDRWAWLLQDTLGISYCLFVLHRVRLPTLKNCSSFLLALLAFDVFFVFVTPFFTKTGESIMAQVALGPAESSSHERLPMVLKVPRLRVSALTLCSQPFSILGFGDIVVPGFLVAYCCRFDVQVCSRQIYFVACTVAYAVGLLVTFMAMVLMQMGQPALLYLVSSTLLTSLAVAACRQELSLFWTGQGRAKMCGLGCAPSAGSRQKQEGAADAHTASTLERGTSRGAGDLDSNPGEDTTEIVTISENEATNPEDRSDSSEGWSDAHLDPNELPFIPPGASEELMPLMPMAMLIPLMPLMPPPSELGHVHAQAQAHETGLPWAGLHKRKGLKVRKSMSTQAPL.

Residues 1–21 form the signal peptide; it reads MACLGFLLPVGFLLLISTVAG. Residues 22 to 186 lie on the Lumenal side of the membrane; the sequence is GKYGVAHVVS…APPEPIIDYN (165 aa). Positions 83 to 163 constitute a PA domain; that stretch reads SPSQRPLRQT…HYADMLDILS (81 aa). A glycan (N-linked (GlcNAc...) asparagine) is linked at Asn100. Residues 187–207 traverse the membrane as a helical segment; it reads MLVIFILAVGTVAAGGYWAGL. Residues 208-253 lie on the Cytoplasmic side of the membrane; sequence TEANRLQRRRARRGGGSGGHHQLQEAAAAEGAQKEDNEDIPVDFTP. The segment at 216–242 is disordered; the sequence is RRARRGGGSGGHHQLQEAAAAEGAQKE. Residues 227–238 show a composition bias toward low complexity; the sequence is HHQLQEAAAAEG. Residues 254 to 274 form a helical membrane-spanning segment; the sequence is AMTGVVVTLSCSLMLLLYFFY. The Lumenal portion of the chain corresponds to 275-276; it reads DH. Residues 277-297 traverse the membrane as a helical segment; the sequence is FVYVTIGIFGLGAGIGLYSCL. Residues 298-319 lie on the Cytoplasmic side of the membrane; that stretch reads SPLVCRLSLRQYQRPPHSLWAS. The helical transmembrane segment at 320–340 threads the bilayer; it reads LPLPLLLLASLCATVIIFWVA. Residues 341 to 346 are Lumenal-facing; that stretch reads YRNEDR. The helical transmembrane segment at 347–365 threads the bilayer; the sequence is WAWLLQDTLGISYCLFVLH. Topologically, residues 366-376 are cytoplasmic; sequence RVRLPTLKNCS. A helical membrane pass occupies residues 377–397; the sequence is SFLLALLAFDVFFVFVTPFFT. Asp386 is a catalytic residue. The Lumenal segment spans residues 398 to 439; it reads KTGESIMAQVALGPAESSSHERLPMVLKVPRLRVSALTLCSQ. A helical membrane pass occupies residues 440–460; that stretch reads PFSILGFGDIVVPGFLVAYCC. Residue Asp448 is part of the active site. Topologically, residues 461–472 are cytoplasmic; the sequence is RFDVQVCSRQIY. Residues 473 to 493 traverse the membrane as a helical segment; it reads FVACTVAYAVGLLVTFMAMVL. At 494-495 the chain is on the lumenal side; it reads MQ. Residues 496-516 traverse the membrane as a helical segment; sequence MGQPALLYLVSSTLLTSLAVA. Residues 499 to 501 carry the PAL motif; it reads PAL. At 517-684 the chain is on the cytoplasmic side; the sequence is ACRQELSLFW…RKSMSTQAPL (168 aa). A disordered region spans residues 548–614; the sequence is KQEGAADAHT…SDAHLDPNEL (67 aa). Polar residues predominate over residues 582–592; the sequence is EIVTISENEAT. A compositionally biased stretch (basic and acidic residues) spans 594–611; sequence PEDRSDSSEGWSDAHLDP.

The protein belongs to the peptidase A22B family. As to quaternary structure, interacts (via active sites) with FREY; the interaction stabilizes FREY1 protein and inhibits SPPL2C proteolytic activity. Post-translationally, glycosylated. Highly expressed in testis where it is primarily localised in spermatids (at protein level).

Its subcellular location is the endoplasmic reticulum membrane. Its function is as follows. Sperm-specific intramembrane-cleaving aspartic protease (I-CLiP) that cleaves distinct tail-anchored proteins and SNARE proteins. In elongated spermatids, modulates intracellular Ca(2+) homeostasis by controlling PLN abundance through proteolytic cleavage. During spermatogenesis, processes SNARE proteins and impacts vesicular trafficking which supports compartmental reorganization in maturating spermatids and may play a role in formation of the acrosome. Functionally, in round spermatids, acts as a scaffold protein supporting FREY1 in IZUMO1 recruitment at the endoplasmic reticulum membrane and coordination of IZUMO1 complex assembly. Stabilizes FREY1 at the endoplasmic reticulum membrane through interaction. May recruit IZUMO1 interaction partners. This chain is Signal peptide peptidase-like 2C, found in Homo sapiens (Human).